We begin with the raw amino-acid sequence, 299 residues long: Tyrosine recombinase XerC (299 aa).

Residues 1–85 (MERQLDAYCE…AVRGLYHYLN (85 aa)) form the Core-binding (CB) domain. Residues 106-285 (RLPKTLDTDR…DFQHLAAVYD (180 aa)) enclose the Tyr recombinase domain. Active-site residues include R146, K170, H237, R240, and H263. Y272 (O-(3'-phospho-DNA)-tyrosine intermediate) is an active-site residue.

This sequence belongs to the 'phage' integrase family. XerC subfamily. As to quaternary structure, forms a cyclic heterotetrameric complex composed of two molecules of XerC and two molecules of XerD.

It localises to the cytoplasm. Its function is as follows. Site-specific tyrosine recombinase, which acts by catalyzing the cutting and rejoining of the recombining DNA molecules. The XerC-XerD complex is essential to convert dimers of the bacterial chromosome into monomers to permit their segregation at cell division. It also contributes to the segregational stability of plasmids. The protein is Tyrosine recombinase XerC of Pseudomonas fluorescens (strain Pf0-1).